Consider the following 132-residue polypeptide: Fatty acid-binding protein, adipocyte (132 aa).

Cys2 is subject to N-acetylcysteine. The residue at position 13 (Ser13) is a Phosphoserine. At Tyr20 the chain carries Phosphotyrosine; by Tyr-kinases. Residues 22–32 (KEVGVGFATRK) carry the Nuclear localization signal motif. A fatty acid is bound at residue 127-129 (RVY).

The protein belongs to the calycin superfamily. Fatty-acid binding protein (FABP) family. As to quaternary structure, monomer. Homodimer. Interacts with PPARG.

Its subcellular location is the cytoplasm. The protein localises to the nucleus. Its function is as follows. Lipid transport protein in adipocytes. Binds both long chain fatty acids and retinoic acid. Delivers long-chain fatty acids and retinoic acid to their cognate receptors in the nucleus. This chain is Fatty acid-binding protein, adipocyte (Fabp4), found in Rattus norvegicus (Rat).